Reading from the N-terminus, the 527-residue chain is MASDFLPVRRALLSVSDKTGLIDLARALVARNVELLSTGGTAKAIREAGLPVKDVAELTGFPEMMDGRVKTLHPLVHGGLLGRAGVDEAVMAEHGIVPIDLLVLNLYPFESVTVKADCTLADAVENIDIGGPAMLRSAAKNFARVAVATDPAQYADLLAELEVNDGQLSAAKRFALSVAAFNRVAQYDAAISNYLSAVADSSEAVPTRSPFPAQINSNFVKVMDLRYGENPHQSGAFYRDLYPVPGTLATFQQLQGKELSYNNLADADAAWECVRQFDAPACVIVKHANPCGVAVGAGCGDAYELAYATDPTSAFGGILAFNKTLDAATAKAILDRQFVEVLIAPDYEAGALEYATRKANVRVLKIPHGNGLNNYDTKRIGSGLLMQSADNRSMSLGELSVVTQRAPNEAELGDLLFAWRVAKYVKSNAIVYAKDSRTIGVGAGQMSRVVSAKIAALKAEEAKLTVAGSVMASDAFFPFRDGIDAAAAAGIKAVIQPGGSMRDGEVIAAADEHGIAMVFTGVRHFRH.

Residues 1-149 (MASDFLPVRR…KNFARVAVAT (149 aa)) form the MGS-like domain.

This sequence belongs to the PurH family.

The enzyme catalyses (6R)-10-formyltetrahydrofolate + 5-amino-1-(5-phospho-beta-D-ribosyl)imidazole-4-carboxamide = 5-formamido-1-(5-phospho-D-ribosyl)imidazole-4-carboxamide + (6S)-5,6,7,8-tetrahydrofolate. It carries out the reaction IMP + H2O = 5-formamido-1-(5-phospho-D-ribosyl)imidazole-4-carboxamide. The protein operates within purine metabolism; IMP biosynthesis via de novo pathway; 5-formamido-1-(5-phospho-D-ribosyl)imidazole-4-carboxamide from 5-amino-1-(5-phospho-D-ribosyl)imidazole-4-carboxamide (10-formyl THF route): step 1/1. It functions in the pathway purine metabolism; IMP biosynthesis via de novo pathway; IMP from 5-formamido-1-(5-phospho-D-ribosyl)imidazole-4-carboxamide: step 1/1. The polypeptide is Bifunctional purine biosynthesis protein PurH (Xanthomonas euvesicatoria pv. vesicatoria (strain 85-10) (Xanthomonas campestris pv. vesicatoria)).